The sequence spans 362 residues: L-asparaginase 2-1 (362 aa).

The first 25 residues, 1–25 (MRSLNTLLLSLFVAMSSGAPLLKIR), serve as a signal peptide directing secretion. Asparagine 29 carries an N-linked (GlcNAc...) asparagine glycan. The Asparaginase/glutaminase domain maps to 33 to 359 (PSIKIFGTGG…DQIRSVFSGV (327 aa)). Threonine 43 acts as the O-isoaspartyl threonine intermediate in catalysis. Serine 89 is a binding site for substrate. A glycan (N-linked (GlcNAc...) asparagine) is linked at asparagine 93. Substrate is bound at residue 122 to 123 (TD). An N-linked (GlcNAc...) asparagine glycan is attached at asparagine 239.

It belongs to the asparaginase 1 family.

The protein localises to the secreted. The protein resides in the periplasm. The catalysed reaction is L-asparagine + H2O = L-aspartate + NH4(+). The chain is L-asparaginase 2-1 (ASP3-1) from Saccharomyces cerevisiae (strain ATCC 204508 / S288c) (Baker's yeast).